The chain runs to 280 residues: NAD kinase (280 aa).

Asp-67 acts as the Proton acceptor in catalysis. NAD(+)-binding positions include 67 to 68, Arg-72, 138 to 139, Asp-167, Ala-175, 178 to 183, and Gln-237; these read DG, ND, and TAYSLS.

This sequence belongs to the NAD kinase family. Requires a divalent metal cation as cofactor.

The protein localises to the cytoplasm. It carries out the reaction NAD(+) + ATP = ADP + NADP(+) + H(+). Its function is as follows. Involved in the regulation of the intracellular balance of NAD and NADP, and is a key enzyme in the biosynthesis of NADP. Catalyzes specifically the phosphorylation on 2'-hydroxyl of the adenosine moiety of NAD to yield NADP. The protein is NAD kinase of Aeropyrum pernix (strain ATCC 700893 / DSM 11879 / JCM 9820 / NBRC 100138 / K1).